The chain runs to 101 residues: Urease subunit beta (101 aa).

Belongs to the urease beta subunit family. In terms of assembly, heterotrimer of UreA (gamma), UreB (beta) and UreC (alpha) subunits. Three heterotrimers associate to form the active enzyme.

It localises to the cytoplasm. The catalysed reaction is urea + 2 H2O + H(+) = hydrogencarbonate + 2 NH4(+). The protein operates within nitrogen metabolism; urea degradation; CO(2) and NH(3) from urea (urease route): step 1/1. This is Urease subunit beta from Ralstonia pickettii (strain 12J).